Reading from the N-terminus, the 148-residue chain is SsrA-binding protein (148 aa).

A disordered region spans residues 119–148; it reads AKGKKQHDKRETEKKRDWEREKARLMRSPG. Positions 126–142 are enriched in basic and acidic residues; the sequence is DKRETEKKRDWEREKAR.

It belongs to the SmpB family.

The protein resides in the cytoplasm. Functionally, required for rescue of stalled ribosomes mediated by trans-translation. Binds to transfer-messenger RNA (tmRNA), required for stable association of tmRNA with ribosomes. tmRNA and SmpB together mimic tRNA shape, replacing the anticodon stem-loop with SmpB. tmRNA is encoded by the ssrA gene; the 2 termini fold to resemble tRNA(Ala) and it encodes a 'tag peptide', a short internal open reading frame. During trans-translation Ala-aminoacylated tmRNA acts like a tRNA, entering the A-site of stalled ribosomes, displacing the stalled mRNA. The ribosome then switches to translate the ORF on the tmRNA; the nascent peptide is terminated with the 'tag peptide' encoded by the tmRNA and targeted for degradation. The ribosome is freed to recommence translation, which seems to be the essential function of trans-translation. This Paraburkholderia xenovorans (strain LB400) protein is SsrA-binding protein.